Reading from the N-terminus, the 472-residue chain is tRNA modification GTPase MnmE (472 aa).

Residues R28, E91, and K130 each contribute to the (6S)-5-formyl-5,6,7,8-tetrahydrofolate site. Positions G225–A391 constitute a TrmE-type G domain. Residue N235 participates in K(+) binding. Residues N235–S240, S254–T260, and D279–G282 each bind GTP. Position 239 (S239) interacts with Mg(2+). 3 residues coordinate K(+): S254, I256, and T259. T260 contributes to the Mg(2+) binding site. K472 is a (6S)-5-formyl-5,6,7,8-tetrahydrofolate binding site.

This sequence belongs to the TRAFAC class TrmE-Era-EngA-EngB-Septin-like GTPase superfamily. TrmE GTPase family. In terms of assembly, homodimer. Heterotetramer of two MnmE and two MnmG subunits. K(+) serves as cofactor.

The protein resides in the cytoplasm. Exhibits a very high intrinsic GTPase hydrolysis rate. Involved in the addition of a carboxymethylaminomethyl (cmnm) group at the wobble position (U34) of certain tRNAs, forming tRNA-cmnm(5)s(2)U34. The polypeptide is tRNA modification GTPase MnmE (Treponema denticola (strain ATCC 35405 / DSM 14222 / CIP 103919 / JCM 8153 / KCTC 15104)).